Here is a 91-residue protein sequence, read N- to C-terminus: uncharacterized protein (91 aa).

Positions 1-18 are cleaved as a signal peptide; it reads MKVNLILFSLFLLVSIMA. The N-palmitoyl cysteine moiety is linked to residue Cys-19. A lipid anchor (S-diacylglycerol cysteine) is attached at Cys-19.

The protein resides in the cell membrane. This is an uncharacterized protein from Escherichia coli (strain K12).